A 644-amino-acid polypeptide reads, in one-letter code: Tubulin--tyrosine ligase-like protein 12 (644 aa).

The segment covering 1-13 (MEAERGPERRPAE) has biased composition (basic and acidic residues). Residues 1–25 (MEAERGPERRPAERSSPGQTPEEGA) are disordered. Residues 300 to 644 (PHGHIFKVYT…PGGCHVTCLV (345 aa)) form the TTL domain. ATP is bound by residues 450–453 (SKYI), lysine 468, and aspartate 470.

The protein belongs to the tubulin--tyrosine ligase family. In terms of assembly, interacts with MAVS; the interaction prevents MAVS binding to TBK1 and IKBKE. Interacts (via N-terminus) with TBK1 (via protein kinase domain). Interacts (via TTL domain) with IKBKE (via protein kinase domain). Interacts with tubulin alpha. Interacts with histone H3 and histone H4 (when trimethylated at 'Lys-20' (H4K20me3)). Interacts with CBX3. In terms of tissue distribution, expressed in the basal layer of prostate and endothelial cells. Increased expression in prostatic intraepithelial neoplasia and metastatic lesions.

It localises to the cytoplasm. The protein localises to the midbody. The protein resides in the cytoskeleton. Its subcellular location is the microtubule organizing center. It is found in the centrosome. It localises to the spindle. The protein localises to the nucleus. In terms of biological role, negatively regulates post-translational modifications of tubulin, including detyrosination of the C-terminus and polyglutamylation of glutamate residues. Also, indirectly promotes histone H4 trimethylation at 'Lys-20' (H4K20me3). Probably by controlling tubulin and/or histone H4 post-translational modifications, plays a role in mitosis and in maintaining chromosome number stability. During RNA virus-mediated infection, acts as a negative regulator of the RIG-I pathway by preventing MAVS binding to TBK1 and IKBKE. This chain is Tubulin--tyrosine ligase-like protein 12 (TTLL12), found in Homo sapiens (Human).